The following is an 827-amino-acid chain: Leucine--tRNA ligase (827 aa).

Positions 42–52 (PYPSGKLHMGH) match the 'HIGH' region motif. The 'KMSKS' region motif lies at 581-585 (KMSKS). ATP is bound at residue Lys584.

It belongs to the class-I aminoacyl-tRNA synthetase family.

The protein localises to the cytoplasm. It catalyses the reaction tRNA(Leu) + L-leucine + ATP = L-leucyl-tRNA(Leu) + AMP + diphosphate. The chain is Leucine--tRNA ligase from Desulforamulus reducens (strain ATCC BAA-1160 / DSM 100696 / MI-1) (Desulfotomaculum reducens).